A 300-amino-acid chain; its full sequence is Glycerol-3-phosphate dehydrogenase [NAD(P)+] (300 aa).

Tryptophan 11, lysine 33, and lysine 79 together coordinate NADPH. Sn-glycerol 3-phosphate contacts are provided by lysine 79, glycine 107, and serine 109. Alanine 111 contributes to the NADPH binding site. Positions 161, 214, 224, 225, and 226 each coordinate sn-glycerol 3-phosphate. Lysine 161 functions as the Proton acceptor in the catalytic mechanism. Arginine 225 provides a ligand contact to NADPH. NADPH is bound by residues valine 249 and glutamate 251.

It belongs to the NAD-dependent glycerol-3-phosphate dehydrogenase family.

The protein localises to the cytoplasm. It catalyses the reaction sn-glycerol 3-phosphate + NAD(+) = dihydroxyacetone phosphate + NADH + H(+). The enzyme catalyses sn-glycerol 3-phosphate + NADP(+) = dihydroxyacetone phosphate + NADPH + H(+). It functions in the pathway membrane lipid metabolism; glycerophospholipid metabolism. Catalyzes the reduction of the glycolytic intermediate dihydroxyacetone phosphate (DHAP) to sn-glycerol 3-phosphate (G3P), the key precursor for phospholipid synthesis. This Campylobacter lari (strain RM2100 / D67 / ATCC BAA-1060) protein is Glycerol-3-phosphate dehydrogenase [NAD(P)+].